A 31-amino-acid chain; its full sequence is uncharacterized protein (31 aa).

A disordered region spans residues 1–31 (MKKLERMSEVSQMCSEAKKNRKRMSVVSSVA).

This is an uncharacterized protein from Sulfolobus islandicus filamentous virus (isolate Iceland/Hveragerdi) (SIFV).